A 529-amino-acid chain; its full sequence is DNA polymerase lambda (529 aa).

Residues 14-109 (DPEGMFAGMV…EKANEDLYVL (96 aa)) form the BRCT domain. Residues 119–199 (PKKSLPAISG…ESTSVYKPPD (81 aa)) are disordered. The span at 153-175 (SHSNTQGSPDSPTSCSVPSTSAS) shows a compositional bias: polar residues. A compositionally biased stretch (low complexity) spans 182–193 (ETPTSPQSESTS). The DNA-binding stretch occupies residues 213–227 (NIYRALGEDRRSFSY). The active site involves His-260. Positions 295-298 (GPAT) are DNA-binding. Residues Arg-336, 367-370 (SYRR), and 376-379 (GDLD) contribute to the dCTP site. The involved in primer binding stretch occupies residues 370-379 (RGKATCGDLD). Residues Asp-377, Asp-379, and Asp-444 each contribute to the Mn(2+) site. The segment at 418-459 (EEGTDSGVDTYFGLCTYPGQELRRRIDFKVYPRDIYSFGLIA) is DNA-binding. Asn-467 is a dCTP binding site.

It belongs to the DNA polymerase type-X family. As to quaternary structure, interacts with the DNA repair proteins XRCC4 and LIG4. Interacts with HSP90-1. It depends on Mn(2+) as a cofactor.

It localises to the nucleus. The enzyme catalyses DNA(n) + a 2'-deoxyribonucleoside 5'-triphosphate = DNA(n+1) + diphosphate. Repair polymerase involved in base excision repair (BER) and responsible for repair of lesions that give rise to abasic (AP) sites in DNA. Has both DNA polymerase and terminal transferase activities. Has a 5'-deoxyribose-5-phosphate lyase (dRP lyase) activity. Involved in the repair of transposon-induced DNA double strand breaks (DSBs). Involved in repair of UV-B-mediated DNA damage during seedling development through an excision repair mechanism. Involved the repair of DSBs induced by high salinity and DNA cross-linking agent. Functions via the DNA non-homologous end joining (NHEJ) pathway. This chain is DNA polymerase lambda, found in Arabidopsis thaliana (Mouse-ear cress).